The primary structure comprises 288 residues: 4-hydroxybenzoate octaprenyltransferase (288 aa).

8 helical membrane passes run 23–43 (IGSLLLLWPTLWALWLAGRGI), 46–66 (AKILVVFVLGVFFMRAAGCVV), 98–118 (ILFVVLILLSFGLVLTLNSMT), 141–161 (LPQVVLGAAFGWSIPMGFAAV), 163–183 (ESLPLVCWLLLLANICWTVAY), 213–233 (LIIGLLQLATLLLMVAIGWLM), 234–254 (NLGGAFYWSILLAGALFTHQQ), and 268–288 (AFLNNNYVGLVLFLGILISYW).

This sequence belongs to the UbiA prenyltransferase family. The cofactor is Mg(2+).

It localises to the cell inner membrane. The enzyme catalyses all-trans-octaprenyl diphosphate + 4-hydroxybenzoate = 4-hydroxy-3-(all-trans-octaprenyl)benzoate + diphosphate. It functions in the pathway cofactor biosynthesis; ubiquinone biosynthesis. Functionally, catalyzes the prenylation of para-hydroxybenzoate (PHB) with an all-trans polyprenyl group. Mediates the second step in the final reaction sequence of ubiquinone-8 (UQ-8) biosynthesis, which is the condensation of the polyisoprenoid side chain with PHB, generating the first membrane-bound Q intermediate 3-octaprenyl-4-hydroxybenzoate. The protein is 4-hydroxybenzoate octaprenyltransferase of Yersinia pestis bv. Antiqua (strain Antiqua).